Reading from the N-terminus, the 48-residue chain is Large ribosomal subunit protein bL33B (48 aa).

The protein belongs to the bacterial ribosomal protein bL33 family.

This chain is Large ribosomal subunit protein bL33B (rpmG 2), found in Mycoplasmoides gallisepticum (strain R(low / passage 15 / clone 2)) (Mycoplasma gallisepticum).